A 362-amino-acid chain; its full sequence is Endopolygalacturonase II (362 aa).

Residues 1–20 (MHSFASLLRYGLAAGATLAS) form the signal peptide. The propeptide occupies 21–27 (ASPIEAR). Cys-30 and Cys-45 form a disulfide bridge. A PbH1 1 repeat occupies 156-186 (SDDITLTDITINNADGDSLGGHNTDAFDVGN). Asp-201 acts as the Proton donor in catalysis. Cys-203 and Cys-219 are joined by a disulfide. PbH1 repeat units lie at residues 209–229 (GENI…SIGS), 238–259 (VKNV…RIKT), 267–289 (VSEI…VIQQ), and 301–322 (TNGV…DSKA). His-223 is a catalytic residue. Asn-240 carries N-linked (GlcNAc...) asparagine glycosylation. Cystine bridges form between Cys-329–Cys-334 and Cys-353–Cys-362.

The protein belongs to the glycosyl hydrolase 28 family.

Its subcellular location is the secreted. The catalysed reaction is (1,4-alpha-D-galacturonosyl)n+m + H2O = (1,4-alpha-D-galacturonosyl)n + (1,4-alpha-D-galacturonosyl)m.. Functionally, involved in maceration and soft-rotting of plant tissue. Hydrolyzes the 1,4-alpha glycosidic bonds of de-esterified pectate in the smooth region of the plant cell wall. The protein is Endopolygalacturonase II (pgaII) of Aspergillus awamori (Black koji mold).